The primary structure comprises 104 residues: MVRLKEKDGGVVFFVKAQPRSSRSAIIGEYDGKIKISLKAAPVDDAANVECCRFLAKSLGVASSRVRILSGHSSRIKRLTIDGMGAAEAATLFGEHLESVEFDL.

It belongs to the UPF0235 family.

The polypeptide is UPF0235 protein Paes_1868 (Prosthecochloris aestuarii (strain DSM 271 / SK 413)).